Reading from the N-terminus, the 1887-residue chain is DNA-directed RNA polymerase II subunit RPB1 (1887 aa).

The Zn(2+) site is built by Cys-67, Cys-70, Cys-77, His-80, Cys-107, Cys-110, Cys-150, and Cys-176. The segment at 156–178 is disordered; it reads MDLTKENQQPDPNKKPGHGGCGH. Mg(2+) is bound by residues Asp-487, Asp-489, and Asp-491. Residues 825–837 form a bridging helix region; the sequence is PSEFYFHAMGGRE. A Glycyl lysine isopeptide (Lys-Gly) (interchain with G-Cter in ubiquitin) cross-link involves residue Lys-1260. Disordered stretches follow at residues 1528 to 1565 and 1579 to 1887; these read TPGG…GPSM and YSPT…ESED. 3 stretches are compositionally biased toward low complexity: residues 1529–1565, 1579–1610, and 1626–1650; these read PGGP…GPSM, YSPT…PTSP, and PQST…PTVQ. Residues 1579 to 1585 form repeat 1; it reads YSPTSPN. The C-terminal domain (CTD); 32 X 7 AA approximate tandem repeats of Y-[ST]-P-[STNVAPGN]-[STGMA]-[PSTR]-[SNAGCQKTLRIMH] stretch occupies residues 1579-1881; that stretch reads YSPTSPNYTA…SPAYSPSSPT (303 aa). The stretch at 1586–1592 is one 2; approximate repeat; that stretch reads YTASSPG. Tandem repeats lie at residues 1598–1604, 1605–1611, 1631–1637, and 1638–1644. Positions 1651-1664 are enriched in polar residues; the sequence is FQSSPSFAGSGSNI. The span at 1665 to 1760 shows a compositional bias: low complexity; it reads YSPGNAYSPS…GVKYSPTSPT (96 aa). 17 repeat units span residues 1671–1677, 1678–1684, 1685–1691, 1692–1698, 1699–1705, 1706–1712, 1713–1719, 1720–1726, 1727–1733, 1740–1746, 1754–1760, 1761–1767, 1777–1783, 1784–1790, 1791–1797, 1798–1804, and 1811–1817. Residues 1776–1786 are compositionally biased toward polar residues; sequence QYTPGSPQYSP. Residues 1788-1813 are compositionally biased toward low complexity; that stretch reads SPKYSPTSPLYSPSSPQHSPSNQYSP. The span at 1814 to 1831 shows a compositional bias: polar residues; that stretch reads TGSTYSATSPRYSPNMSI. The stretch at 1818 to 1824 is one 24; approximate repeat; that stretch reads YSATSPR. 8 tandem repeats follow at residues 1825-1831, 1832-1838, 1839-1845, 1846-1852, 1853-1859, 1860-1866, 1868-1874, and 1875-1881. Positions 1832-1849 are enriched in low complexity; it reads YSPSSTKYSPTSPTYTPT. Residues 1850-1859 show a composition bias toward polar residues; that stretch reads ARNYSPTSPM. A compositionally biased stretch (low complexity) spans 1860 to 1881; the sequence is YSPTAPSHYSPTSPAYSPSSPT.

The protein belongs to the RNA polymerase beta' chain family. Component of the RNA polymerase II (Pol II) complex consisting of 12 subunits. Post-translationally, the tandem 7 residues repeats in the C-terminal domain (CTD) can be highly phosphorylated. The phosphorylation activates Pol II. Phosphorylation occurs mainly at residues 'Ser-2' and 'Ser-5' of the heptapeptide repeat. The phosphorylation state is believed to result from the balanced action of site-specific CTD kinases and phosphatase, and a 'CTD code' that specifies the position of Pol II within the transcription cycle has been proposed. Following transcription stress, the elongating form of RNA polymerase II (RNA pol IIo) is polyubiquitinated via 'Lys-63'-linkages on Lys-1260 at DNA damage sites without leading to degradation: ubiquitination promotes RNA pol IIo backtracking to allow access by the transcription-coupled nucleotide excision repair (TC-NER) machinery. Subsequent DEF1-dependent polyubiquitination by the elongin complex via 'Lys-48'-linkages may lead to proteasome-mediated degradation; presumably at stalled RNA pol II where TC-NER has failed, to halt global transcription and enable 'last resort' DNA repair pathways.

Its subcellular location is the nucleus. The catalysed reaction is RNA(n) + a ribonucleoside 5'-triphosphate = RNA(n+1) + diphosphate. Its function is as follows. DNA-dependent RNA polymerase catalyzes the transcription of DNA into RNA using the four ribonucleoside triphosphates as substrates. Largest and catalytic component of RNA polymerase II which synthesizes mRNA precursors and many functional non-coding RNAs. Forms the polymerase active center together with the second largest subunit. Pol II is the central component of the basal RNA polymerase II transcription machinery. It is composed of mobile elements that move relative to each other. RPB1 is part of the core element with the central large cleft, the clamp element that moves to open and close the cleft and the jaws that are thought to grab the incoming DNA template. At the start of transcription, a single-stranded DNA template strand of the promoter is positioned within the central active site cleft of Pol II. A bridging helix emanates from RPB1 and crosses the cleft near the catalytic site and is thought to promote translocation of Pol II by acting as a ratchet that moves the RNA-DNA hybrid through the active site by switching from straight to bent conformations at each step of nucleotide addition. During transcription elongation, Pol II moves on the template as the transcript elongates. Elongation is influenced by the phosphorylation status of the C-terminal domain (CTD) of Pol II largest subunit (RPB1), which serves as a platform for assembly of factors that regulate transcription initiation, elongation, termination and mRNA processing. The sequence is that of DNA-directed RNA polymerase II subunit RPB1 from Drosophila melanogaster (Fruit fly).